Consider the following 499-residue polypeptide: Cryptochrome-1 (499 aa).

Residues R190, S218, S220, Q261, H328, 360–362 (DAD), C366, and N369 contribute to the FAD site.

This sequence belongs to the DNA photolyase class-1 family. As to quaternary structure, interacts with tim and per; promoted by light conditions. It depends on FAD as a cofactor.

Its subcellular location is the cytoplasm. It is found in the perinuclear region. The protein localises to the nucleus. Its function is as follows. Blue light-dependent regulator that is the input of the circadian feedback loop. Has no photolyase activity for cyclobutane pyrimidine dimers or 6-4 photoproducts. Regulation of expression by light suggests a role in photoreception for locomotor activity rhythms. Functions, together with per, as a transcriptional repressor required for the oscillation of peripheral circadian clocks and for the correct specification of clock cells. Genes directly activated by the transcription factors Clock (Clk) and cycle (cyc) are repressed by cry. The sequence is that of Cryptochrome-1 from Culex quinquefasciatus (Southern house mosquito).